Reading from the N-terminus, the 128-residue chain is MQKRVRNRLITIIICFCSAFLGIGIILYNLENNIVFFLPPSKINAIEQDKELRVGGLVKTSSINKIAADKISFIITDNIKDLEILYQGILPALFREGQGIIAIGQLSDGKFMARQLLTKHDENYRPTR.

The Cytoplasmic portion of the chain corresponds to 1 to 8 (MQKRVRNR). Residues 9 to 29 (LITIIICFCSAFLGIGIILYN) form a helical; Signal-anchor for type II membrane protein membrane-spanning segment. Residues 30–128 (LENNIVFFLP…KHDENYRPTR (99 aa)) are Periplasmic-facing. Residues His-120 and Tyr-124 each coordinate heme.

Belongs to the CcmE/CycJ family.

Its subcellular location is the cell inner membrane. Heme chaperone required for the biogenesis of c-type cytochromes. Transiently binds heme delivered by CcmC and transfers the heme to apo-cytochromes in a process facilitated by CcmF and CcmH. The polypeptide is Cytochrome c-type biogenesis protein CcmE (Rickettsia canadensis (strain McKiel)).